Reading from the N-terminus, the 311-residue chain is Putative ABC transporter ATP-binding protein MG467 (311 aa).

The ABC transporter domain occupies I84–L310. Position 122–129 (G122–T129) interacts with ATP.

This sequence belongs to the ABC transporter superfamily.

In Mycoplasma genitalium (strain ATCC 33530 / DSM 19775 / NCTC 10195 / G37) (Mycoplasmoides genitalium), this protein is Putative ABC transporter ATP-binding protein MG467.